Here is a 239-residue protein sequence, read N- to C-terminus: Probable transcriptional regulatory protein Ajs_1898 (239 aa).

Residues 1–21 are disordered; the sequence is MAGHSKWANIQHRKGRQDEKR.

Belongs to the TACO1 family.

The protein resides in the cytoplasm. This chain is Probable transcriptional regulatory protein Ajs_1898, found in Acidovorax sp. (strain JS42).